The sequence spans 429 residues: Cholesterol 7-desaturase nvd (429 aa).

Residues 23 to 43 (FVICLWTLAVTFIRIYWIFFV) form a helical membrane-spanning segment. In terms of domain architecture, Rieske spans 98–201 (YGILKSSQLK…SQEVDGFIFI (104 aa)). [2Fe-2S] cluster is bound by residues Cys-138, His-140, Cys-158, and His-161.

It belongs to the cholesterol 7-desaturase family. [2Fe-2S] cluster is required as a cofactor. In terms of tissue distribution, expressed predominantly in the prothoracic gland and weakly in brain and malpighian tubules.

It localises to the membrane. It catalyses the reaction cholesterol + NADPH + O2 + H(+) = 7-dehydrocholesterol + NADP(+) + 2 H2O. The catalysed reaction is cholesterol + NADH + O2 + H(+) = 7-dehydrocholesterol + NAD(+) + 2 H2O. The protein operates within steroid hormone biosynthesis; dafachronic acid biosynthesis. In terms of biological role, catalyzes the production of 7-dehydrocholesterol (7-DHC or cholesta-5,7-dien-3beta-ol) by inserting a double bond (desaturating) at the C7-C8 single bond of cholesterol. Essential regulator of steroid biosynthesis, as this reaction is the first step in the synthesis of the steroid hormone Delta(7)-dafachronic acid. Required for insect molting, metamorphosis and body growth throughout development via the regulation of ecdysteroid biosynthesis in the prothoracic gland. This Drosophila melanogaster (Fruit fly) protein is Cholesterol 7-desaturase nvd.